A 505-amino-acid chain; its full sequence is Maturase K (505 aa).

This sequence belongs to the intron maturase 2 family. MatK subfamily.

The protein resides in the plastid. It localises to the chloroplast. Its function is as follows. Usually encoded in the trnK tRNA gene intron. Probably assists in splicing its own and other chloroplast group II introns. The protein is Maturase K of Blitum bonus-henricus (Good King Henry).